The sequence spans 397 residues: Imidazolonepropionase (397 aa).

2 residues coordinate Fe(3+): His-66 and His-68. Positions 66 and 68 each coordinate Zn(2+). 4-imidazolone-5-propanoate is bound by residues Arg-75, Tyr-138, and His-171. Residue Tyr-138 coordinates N-formimidoyl-L-glutamate. Fe(3+) is bound at residue His-236. His-236 contributes to the Zn(2+) binding site. Gln-239 lines the 4-imidazolone-5-propanoate pocket. Asp-311 is a binding site for Fe(3+). Asp-311 serves as a coordination point for Zn(2+). The N-formimidoyl-L-glutamate site is built by Asn-313 and Gly-315. Ser-316 lines the 4-imidazolone-5-propanoate pocket.

The protein belongs to the metallo-dependent hydrolases superfamily. HutI family. The cofactor is Zn(2+). Requires Fe(3+) as cofactor.

The protein resides in the cytoplasm. It carries out the reaction 4-imidazolone-5-propanoate + H2O = N-formimidoyl-L-glutamate. It functions in the pathway amino-acid degradation; L-histidine degradation into L-glutamate; N-formimidoyl-L-glutamate from L-histidine: step 3/3. Functionally, catalyzes the hydrolytic cleavage of the carbon-nitrogen bond in imidazolone-5-propanoate to yield N-formimidoyl-L-glutamate. It is the third step in the universal histidine degradation pathway. The chain is Imidazolonepropionase from Roseobacter denitrificans (strain ATCC 33942 / OCh 114) (Erythrobacter sp. (strain OCh 114)).